Reading from the N-terminus, the 71-residue chain is DNA-directed RNA polymerases I, II, and III subunit RPABC5 (71 aa).

4 residues coordinate Zn(2+): C7, C10, C44, and C45.

The protein belongs to the archaeal Rpo10/eukaryotic RPB10 RNA polymerase subunit family. As to quaternary structure, component of the RNA polymerase I (Pol I), RNA polymerase II (Pol II) and RNA polymerase III (Pol III) complexes consisting of at least 13, 12 and 17 subunits, respectively.

It is found in the nucleus. In terms of biological role, DNA-dependent RNA polymerase catalyzes the transcription of DNA into RNA using the four ribonucleoside triphosphates as substrates. Common component of RNA polymerases I, II and III which synthesize ribosomal RNA precursors, mRNA precursors and many functional non-coding RNAs, and a small RNAs, such as 5S rRNA and tRNAs, respectively. Pol II is the central component of the basal RNA polymerase II transcription machinery. Pols are composed of mobile elements that move relative to each other. In Pol II, RBP10 is part of the core element with the central large cleft. This chain is DNA-directed RNA polymerases I, II, and III subunit RPABC5, found in Brassica napus (Rape).